Consider the following 364-residue polypeptide: Serine/threonine-protein kinase ENV7 (364 aa).

S-palmitoyl cysteine attachment occurs at residues Cys13, Cys14, and Cys15. A Protein kinase domain is found at 30 to 364 (YRIQRLLGEG…LLNLLQDLDT (335 aa)). ATP is bound by residues 36–44 (LGEGGMSFV) and Lys69. Asp215 functions as the Proton acceptor in the catalytic mechanism.

Belongs to the protein kinase superfamily. Ser/Thr protein kinase family.

Its subcellular location is the vacuole membrane. It catalyses the reaction L-seryl-[protein] + ATP = O-phospho-L-seryl-[protein] + ADP + H(+). The catalysed reaction is L-threonyl-[protein] + ATP = O-phospho-L-threonyl-[protein] + ADP + H(+). In terms of biological role, serine/threonine-protein kinase involved in vacuolar processing and morphology. This chain is Serine/threonine-protein kinase ENV7 (ENV7), found in Saccharomyces cerevisiae (strain ATCC 204508 / S288c) (Baker's yeast).